Reading from the N-terminus, the 771-residue chain is Putative 8-amino-7-oxononanoate synthase 2 (771 aa).

The unknown stretch occupies residues methionine 1–isoleucine 418. Position 407 (arginine 407) interacts with substrate. Positions valine 419–leucine 771 are KAPA synthase. Glycine 485 to tyrosine 486 provides a ligand contact to pyridoxal 5'-phosphate. Histidine 510 is a substrate binding site. Pyridoxal 5'-phosphate-binding positions include serine 556 and aspartate 581–histidine 584. Position 615 is an N6-(pyridoxal phosphate)lysine (lysine 615).

It in the C-terminal section; belongs to the class-II pyridoxal-phosphate-dependent aminotransferase family. BioF subfamily. Requires pyridoxal 5'-phosphate as cofactor.

It carries out the reaction 6-carboxyhexanoyl-[ACP] + L-alanine + H(+) = (8S)-8-amino-7-oxononanoate + holo-[ACP] + CO2. Catalyzes the decarboxylative condensation of pimeloyl-[acyl-carrier protein] and L-alanine to produce 8-amino-7-oxononanoate (AON), [acyl-carrier protein], and carbon dioxide. In Mycobacterium tuberculosis (strain CDC 1551 / Oshkosh), this protein is Putative 8-amino-7-oxononanoate synthase 2 (bioF2).